The primary structure comprises 484 residues: PTS system N-acetylmuramic acid-specific EIIBC component (484 aa).

The 89-residue stretch at 1-89 (MAKITSNTVS…NQLIDSLTSG (89 aa)) folds into the PTS EIIB type-1 domain. C28 functions as the Phosphocysteine intermediate; for EIIB activity in the catalytic mechanism. In terms of domain architecture, PTS EIIC type-1 spans 125–484 (SKFATIFTPL…FFGCKDVDLS (360 aa)). The next 10 helical transmembrane spans lie at 127–147 (FATI…LLGF), 168–188 (LIAY…ILIG), 194–214 (AFGG…LGYN), 228–248 (FFGF…AAII), 266–286 (MILT…LIIM), 310–330 (AAIL…QGFV), 345–365 (LFPI…ALYF), 379–399 (GAII…VTLP), 409–429 (IGGA…LPVG), and 451–471 (IFPG…VGFL).

It localises to the cell inner membrane. It carries out the reaction N-acetyl-beta-D-muramate(out) + N(pros)-phospho-L-histidyl-[protein] = N-acetyl-beta-D-muramate 6-phosphate(in) + L-histidyl-[protein]. Its function is as follows. The phosphoenolpyruvate-dependent sugar phosphotransferase system (sugar PTS), a major carbohydrate active transport system, catalyzes the phosphorylation of incoming sugar substrates concomitantly with their translocation across the cell membrane. This system is involved in N-acetylmuramic acid (MurNAc) transport, yielding cytoplasmic MurNAc-6-P. Is also able to take up anhydro-N-acetylmuramic acid (anhMurNAc), but cannot phosphorylate the carbon 6, probably because of the 1,6-anhydro ring. The protein is PTS system N-acetylmuramic acid-specific EIIBC component (murP) of Vibrio parahaemolyticus serotype O3:K6 (strain RIMD 2210633).